The following is a 677-amino-acid chain: uncharacterized protein (677 aa).

3 helical membrane-spanning segments follow: residues 80-102 (ILSL…RASF), 338-360 (ALLS…LFGF), and 367-386 (LVAM…LLSL). Positions 523–556 (DEAASLPSDSSPEEDLDPLEEVESIEGTAEESTR) are disordered. Acidic residues predominate over residues 533 to 546 (SPEEDLDPLEEVES).

It localises to the cell membrane. This is an uncharacterized protein from Treponema pallidum (strain Nichols).